The following is a 199-amino-acid chain: MSEKLQDLAAHVAQQRPGDVISAEVVQGELTVTVKPEGIADFVRFLRDDAGCRFTTLVDLTAVDWPERVERFEMVWHFLSMWKNQRIRVKAGLAEDAMCPSIVEVYPAANWYEREVFDMFGILFSGHPDLRRLLTDYGFRGHPLRKDFPTTGYIELRYDEVQKRVVYEPVKLAQEYRQFDFLSPWEGAQSVLPGDEKRS.

It belongs to the complex I 30 kDa subunit family. As to quaternary structure, NDH-1 is composed of 14 different subunits. Subunits NuoB, C, D, E, F, and G constitute the peripheral sector of the complex.

The protein localises to the cell inner membrane. It carries out the reaction a quinone + NADH + 5 H(+)(in) = a quinol + NAD(+) + 4 H(+)(out). Functionally, NDH-1 shuttles electrons from NADH, via FMN and iron-sulfur (Fe-S) centers, to quinones in the respiratory chain. The immediate electron acceptor for the enzyme in this species is believed to be ubiquinone. Couples the redox reaction to proton translocation (for every two electrons transferred, four hydrogen ions are translocated across the cytoplasmic membrane), and thus conserves the redox energy in a proton gradient. The chain is NADH-quinone oxidoreductase subunit C from Rhodobacter capsulatus (Rhodopseudomonas capsulata).